The following is a 150-amino-acid chain: Large ribosomal subunit protein uL13 (150 aa).

Positions 129–150 are disordered; it reads PEHPHSAQRPQTLQLNPAASSQ. Over residues 136 to 150 the composition is skewed to polar residues; it reads QRPQTLQLNPAASSQ.

Belongs to the universal ribosomal protein uL13 family. Part of the 50S ribosomal subunit.

In terms of biological role, this protein is one of the early assembly proteins of the 50S ribosomal subunit, although it is not seen to bind rRNA by itself. It is important during the early stages of 50S assembly. The chain is Large ribosomal subunit protein uL13 from Prochlorococcus marinus (strain MIT 9303).